The sequence spans 576 residues: POU domain, class 6, transcription factor 1 (576 aa).

Positions 65–88 (PAEAGSCDPDHSAEATVAARSPSE) are disordered. A POU-specific domain is found at 414–488 (EDGINLEEIR…VLEKWLMEAE (75 aa)). A DNA-binding region (homeobox) is located at residues 509-568 (KRKRRTSFTPQAIEALNAYFEKNPLPTGQEITEIAKELNYDREVVRVWFCNRRQTLKNTS).

This sequence belongs to the POU transcription factor family. Class-6 subfamily. As to expression, isoform C1 and isoform C2 are found in the brain, while isoform C7 is found in the testis.

Its subcellular location is the nucleus. Functionally, transcription factor that binds preferentially to a variant of the octamer motif (5'-ATGATAAT-3'). The chain is POU domain, class 6, transcription factor 1 (Pou6f1) from Mus musculus (Mouse).